The sequence spans 587 residues: Protein NDNF (587 aa).

An N-terminal signal peptide occupies residues 1–24 (MQRSTMLPGVELLLLFLLSTSLHA). 8 N-linked (GlcNAc...) asparagine glycosylation sites follow: asparagine 109, asparagine 129, asparagine 190, asparagine 321, asparagine 334, asparagine 459, asparagine 498, and asparagine 558.

In terms of assembly, binds heparin. Interacts with dally; the interaction promotes dally degradation. Interacts with dpp and gbb.

It is found in the secreted. It localises to the extracellular space. Its subcellular location is the extracellular matrix. Its function is as follows. Secretory protein that acts as a feedback regulator of dpp/BMP, wg and hh signaling pathways. In the developing wing, is a dosage-dependent modulator of dpp/BMP signaling involved in wing growth and crossvein patterning; low levels promote and high levels inhibit dpp/BMP signaling. In the early pupal wing, inhibits dpp/BMP signaling activity to prevent the formation of ectopic crossveins in the posterior compartment. Binds to dpp and gbb to modulate their release and activity decreasing dpp/BMP signaling in the responding cells. During wing development regulates dpp/BMP coreceptor dally availability on the cell surface. Might have a role in testis development. This Drosophila melanogaster (Fruit fly) protein is Protein NDNF.